The chain runs to 709 residues: Polyribonucleotide nucleotidyltransferase (709 aa).

2 residues coordinate Mg(2+): D486 and D492. The KH domain occupies 553–612; sequence PRIHTIKINPDKIKDVIGKGGSVIRALTEETGTTIEIEDDGTVKIAATDGEKAKHAISRI. The 69-residue stretch at 622–690 folds into the S1 motif domain; it reads ARIYTGKVTR…RQGRVRLSIK (69 aa).

This sequence belongs to the polyribonucleotide nucleotidyltransferase family. In terms of assembly, component of the RNA degradosome, which is a multiprotein complex involved in RNA processing and mRNA degradation. The cofactor is Mg(2+).

The protein resides in the cytoplasm. The catalysed reaction is RNA(n+1) + phosphate = RNA(n) + a ribonucleoside 5'-diphosphate. Functionally, involved in mRNA degradation. Catalyzes the phosphorolysis of single-stranded polyribonucleotides processively in the 3'- to 5'-direction. The sequence is that of Polyribonucleotide nucleotidyltransferase from Photorhabdus laumondii subsp. laumondii (strain DSM 15139 / CIP 105565 / TT01) (Photorhabdus luminescens subsp. laumondii).